The sequence spans 466 residues: Glutamate--tRNA ligase 2 (466 aa).

The 'HIGH' region signature appears at 9–19 (PSPTGYLHVGG). The 'KMSKS' region signature appears at 234-238 (PLSKR). An ATP-binding site is contributed by K237.

Belongs to the class-I aminoacyl-tRNA synthetase family. Glutamate--tRNA ligase type 1 subfamily. In terms of assembly, monomer.

Its subcellular location is the cytoplasm. It catalyses the reaction tRNA(Glu) + L-glutamate + ATP = L-glutamyl-tRNA(Glu) + AMP + diphosphate. Catalyzes the attachment of glutamate to tRNA(Glu) in a two-step reaction: glutamate is first activated by ATP to form Glu-AMP and then transferred to the acceptor end of tRNA(Glu). This is Glutamate--tRNA ligase 2 from Pseudothermotoga lettingae (strain ATCC BAA-301 / DSM 14385 / NBRC 107922 / TMO) (Thermotoga lettingae).